The following is a 115-amino-acid chain: Large ribosomal subunit protein bL20 (115 aa).

It belongs to the bacterial ribosomal protein bL20 family.

In terms of biological role, binds directly to 23S ribosomal RNA and is necessary for the in vitro assembly process of the 50S ribosomal subunit. It is not involved in the protein synthesizing functions of that subunit. The protein is Large ribosomal subunit protein bL20 of Prochlorococcus marinus (strain MIT 9301).